A 136-amino-acid chain; its full sequence is Globin CTP-III (136 aa).

Residues 1–136 (LSADQISTVQ…TFFGMIFSKM (136 aa)) enclose the Globin domain. Position 87 (histidine 87) interacts with heme b.

Belongs to the globin family. Monomer.

The polypeptide is Globin CTP-III (Chironomus thummi piger (Midge)).